The following is a 227-amino-acid chain: Cytochrome c oxidase subunit 2 (227 aa).

Over 1 to 26 (MATWSNLSLQDGASPLMEQLSFFHDH) the chain is Mitochondrial intermembrane. A helical membrane pass occupies residues 27 to 48 (TMIDLLLITMIVGYSLSYMLLT). The Mitochondrial matrix portion of the chain corresponds to 49-62 (KYTNRNMLHGHLIE). The helical transmembrane segment at 63-82 (TIWTALPAITLIFIALPSLR) threads the bilayer. Residues 83–227 (LLYLLDDSSD…LFIKWLSNMM (145 aa)) are Mitochondrial intermembrane-facing. Histidine 161, cysteine 196, glutamate 198, cysteine 200, histidine 204, and methionine 207 together coordinate Cu cation. Glutamate 198 is a binding site for Mg(2+).

The protein belongs to the cytochrome c oxidase subunit 2 family. Component of the cytochrome c oxidase (complex IV, CIV), a multisubunit enzyme composed of a catalytic core of 3 subunits and several supernumerary subunits. The complex exists as a monomer or a dimer and forms supercomplexes (SCs) in the inner mitochondrial membrane with ubiquinol-cytochrome c oxidoreductase (cytochrome b-c1 complex, complex III, CIII). It depends on Cu cation as a cofactor.

The protein localises to the mitochondrion inner membrane. The enzyme catalyses 4 Fe(II)-[cytochrome c] + O2 + 8 H(+)(in) = 4 Fe(III)-[cytochrome c] + 2 H2O + 4 H(+)(out). In terms of biological role, component of the cytochrome c oxidase, the last enzyme in the mitochondrial electron transport chain which drives oxidative phosphorylation. The respiratory chain contains 3 multisubunit complexes succinate dehydrogenase (complex II, CII), ubiquinol-cytochrome c oxidoreductase (cytochrome b-c1 complex, complex III, CIII) and cytochrome c oxidase (complex IV, CIV), that cooperate to transfer electrons derived from NADH and succinate to molecular oxygen, creating an electrochemical gradient over the inner membrane that drives transmembrane transport and the ATP synthase. Cytochrome c oxidase is the component of the respiratory chain that catalyzes the reduction of oxygen to water. Electrons originating from reduced cytochrome c in the intermembrane space (IMS) are transferred via the dinuclear copper A center (CU(A)) of subunit 2 and heme A of subunit 1 to the active site in subunit 1, a binuclear center (BNC) formed by heme A3 and copper B (CU(B)). The BNC reduces molecular oxygen to 2 water molecules using 4 electrons from cytochrome c in the IMS and 4 protons from the mitochondrial matrix. The polypeptide is Cytochrome c oxidase subunit 2 (COII) (Locusta migratoria (Migratory locust)).